The chain runs to 304 residues: Pyridoxal 5'-phosphate synthase subunit PdxS (304 aa).

A D-ribose 5-phosphate-binding site is contributed by Asp-34. The Schiff-base intermediate with D-ribose 5-phosphate role is filled by Lys-91. Gly-163 serves as a coordination point for D-ribose 5-phosphate. Arg-175 is a D-glyceraldehyde 3-phosphate binding site. D-ribose 5-phosphate-binding positions include Gly-224 and 245–246; that span reads GS.

The protein belongs to the PdxS/SNZ family. In terms of assembly, in the presence of PdxT, forms a dodecamer of heterodimers.

The enzyme catalyses aldehydo-D-ribose 5-phosphate + D-glyceraldehyde 3-phosphate + L-glutamine = pyridoxal 5'-phosphate + L-glutamate + phosphate + 3 H2O + H(+). It functions in the pathway cofactor biosynthesis; pyridoxal 5'-phosphate biosynthesis. Catalyzes the formation of pyridoxal 5'-phosphate from ribose 5-phosphate (RBP), glyceraldehyde 3-phosphate (G3P) and ammonia. The ammonia is provided by the PdxT subunit. Can also use ribulose 5-phosphate and dihydroxyacetone phosphate as substrates, resulting from enzyme-catalyzed isomerization of RBP and G3P, respectively. This Streptomyces avermitilis (strain ATCC 31267 / DSM 46492 / JCM 5070 / NBRC 14893 / NCIMB 12804 / NRRL 8165 / MA-4680) protein is Pyridoxal 5'-phosphate synthase subunit PdxS.